A 354-amino-acid chain; its full sequence is CX3C chemokine receptor 1 (354 aa).

The Extracellular segment spans residues 1 to 32 (MPTSFPELDLENFEYDDSAEACYLGDIVAFGT). Residues 33-60 (IFLSIFYSLVFTFGLVGNLLVVLALTNS) traverse the membrane as a helical segment. At 61-70 (RKSKSITDIY) the chain is on the cytoplasmic side. Residues 71-91 (LLNLALSDLLFVATLPFWTHY) traverse the membrane as a helical segment. Over 92–104 (LISHEGLHNAMCK) the chain is Extracellular. A disulfide bond links cysteine 103 and cysteine 176. Residues 105–126 (LTTAFFFIGFFGGIFFITVISI) traverse the membrane as a helical segment. Residues 127–143 (DRYLAIVLAANSMNNRT) are Cytoplasmic-facing. Residues 144–168 (VQHGVTISLGVWAAAILVASPQFMF) form a helical membrane-spanning segment. Residues 169–196 (TKRKDNECLGDYPEVLQEIWPVLRNSEV) are Extracellular-facing. The chain crosses the membrane as a helical span at residues 197 to 216 (NILGFVLPLLIMSFCYFRIV). Over 217 to 232 (RTLFSCKNRKKARAIR) the chain is Cytoplasmic. A helical membrane pass occupies residues 233-257 (LILLVVVVFFLFWTPYNIVIFLETL). Topologically, residues 258-274 (KFYNFFPSCGMKRDLRW) are extracellular. Residues 275-298 (ALSVTETVAFSHCCLNPFIYAFAG) form a helical membrane-spanning segment. The Cytoplasmic segment spans residues 299–354 (EKFRRYLRHLYNKCLAVLCGRPVHAGFSTESQRSRQDSILSSLTHYTSEGEGSLLL). Phosphothreonine is present on threonine 345.

This sequence belongs to the G-protein coupled receptor 1 family. As to quaternary structure, found in a ternary complex with CX3CL1 and ITGAV:ITGB3 or ITGA4:ITGB1. This protein is not N-glycosylated which is unusual for G-protein-coupled receptors. In terms of tissue distribution, most abundant in adult spinal cord, brain, kidney, gut, uterus and testes.

Its subcellular location is the cell membrane. Receptor for the C-X3-C chemokine fractalkine (CX3CL1) present on many early leukocyte cells; CX3CR1-CX3CL1 signaling exerts distinct functions in different tissue compartments, such as immune response, inflammation, cell adhesion and chemotaxis. CX3CR1-CX3CL1 signaling mediates cell migratory functions. Responsible for the recruitment of natural killer (NK) cells to inflamed tissues. Acts as a regulator of inflammation process leading to atherogenesis by mediating macrophage and monocyte recruitment to inflamed atherosclerotic plaques, promoting cell survival. Involved in airway inflammation by promoting interleukin 2-producing T helper (Th2) cell survival in inflamed lung. Involved in the migration of circulating monocytes to non-inflamed tissues, where they differentiate into macrophages and dendritic cells. Acts as a negative regulator of angiogenesis, probably by promoting macrophage chemotaxis. Plays a key role in brain microglia by regulating inflammatory response in the central nervous system (CNS) and regulating synapse maturation. Required to restrain the microglial inflammatory response in the CNS and the resulting parenchymal damage in response to pathological stimuli. Involved in brain development by participating in synaptic pruning, a natural process during which brain microglia eliminates extra synapses during postnatal development. Synaptic pruning by microglia is required to promote the maturation of circuit connectivity during brain development. Acts as an important regulator of the gut microbiota by controlling immunity to intestinal bacteria and fungi. Expressed in lamina propria dendritic cells in the small intestine, which form transepithelial dendrites capable of taking up bacteria in order to provide defense against pathogenic bacteria. Required to initiate innate and adaptive immune responses against dissemination of commensal fungi (mycobiota) component of the gut: expressed in mononuclear phagocytes (MNPs) and acts by promoting induction of antifungal IgG antibodies response to confer protection against disseminated C.albicans or C.auris infection. Also acts as a receptor for C-C motif chemokine CCL26, inducing cell chemotaxis. This Rattus norvegicus (Rat) protein is CX3C chemokine receptor 1.